Reading from the N-terminus, the 129-residue chain is Small ribosomal subunit protein uS11 (129 aa).

This sequence belongs to the universal ribosomal protein uS11 family. As to quaternary structure, part of the 30S ribosomal subunit. Interacts with proteins S7 and S18. Binds to IF-3.

Functionally, located on the platform of the 30S subunit, it bridges several disparate RNA helices of the 16S rRNA. Forms part of the Shine-Dalgarno cleft in the 70S ribosome. This chain is Small ribosomal subunit protein uS11, found in Bartonella quintana (strain Toulouse) (Rochalimaea quintana).